Consider the following 189-residue polypeptide: Blue copper protein (189 aa).

Positions methionine 1–alanine 24 are cleaved as a signal peptide. One can recognise a Phytocyanin domain in the interval threonine 25 to alanine 124. Cu cation contacts are provided by histidine 65, cysteine 106, and histidine 111. Cysteine 78 and cysteine 106 are disulfide-bonded. Over residues glycine 127 to threonine 160 the composition is skewed to low complexity. A disordered region spans residues glycine 127–serine 165. Asparagine 163 is a glycosylation site (N-linked (GlcNAc...) asparagine).

The chain is Blue copper protein from Pisum sativum (Garden pea).